A 617-amino-acid chain; its full sequence is MKQSKIPIPTLREMPSDAQVISHALMLRAGYVRQVSAGVYSYLPLANRVIEKAKNIMRQEFEKIGAVEMLAPALLSAELWRESGRYETYGEDLYKLKNREKSDFILGPTHEETFTAIVRDSVKSYKQLPLNLYQIQPKYRDEKRPRNGLLRTREFIMKDAYSFHANYDSLDSVYDEYKAAYERIFTRSGLDFKAIIGDGGAMGGKDSQEFMAITSARTDLDRWVVLDKSVASFDEIPAEVQEEIKAELLKWIVSGEDTIAYSSESSYAANLEMATNEYKPSNRVVAEEEVTRVATPDVKSIDEVAAFLNVPEEQTIKTLFYIADGELVAALLVGNDQLNEVKLKNHLGADFFDVASEEEVANVVQAGFGSLGPVGLPENIKIIADRKVQDVRNAVVGANEDGYHLTGVNPGRDFTSEYVDIREVREGEISPDGQGVLNFARGIEIGHIFKLGTRYSASMGADVLDENGRAVPIIMGCYGIGVSRLLSAVMEQHARLFVNKTPKGEYRYAWGINFPKELAPFDVHLITVNVKDEEAQALTEKLEASLMGAGYEVLTDDRNERVGVKFSDSDLIGLPIRITVGKKAADGIVEVKIKATGDTIEVHADNVLETLEILSKK.

Belongs to the class-II aminoacyl-tRNA synthetase family. ProS type 1 subfamily. As to quaternary structure, homodimer.

Its subcellular location is the cytoplasm. The catalysed reaction is tRNA(Pro) + L-proline + ATP = L-prolyl-tRNA(Pro) + AMP + diphosphate. Its function is as follows. Catalyzes the attachment of proline to tRNA(Pro) in a two-step reaction: proline is first activated by ATP to form Pro-AMP and then transferred to the acceptor end of tRNA(Pro). As ProRS can inadvertently accommodate and process non-cognate amino acids such as alanine and cysteine, to avoid such errors it has two additional distinct editing activities against alanine. One activity is designated as 'pretransfer' editing and involves the tRNA(Pro)-independent hydrolysis of activated Ala-AMP. The other activity is designated 'posttransfer' editing and involves deacylation of mischarged Ala-tRNA(Pro). The misacylated Cys-tRNA(Pro) is not edited by ProRS. In Streptococcus pneumoniae (strain P1031), this protein is Proline--tRNA ligase.